Here is an 874-residue protein sequence, read N- to C-terminus: Alanine--tRNA ligase (874 aa).

The Zn(2+) site is built by His-564, His-568, Cys-665, and His-669.

This sequence belongs to the class-II aminoacyl-tRNA synthetase family. It depends on Zn(2+) as a cofactor.

The protein resides in the cytoplasm. The catalysed reaction is tRNA(Ala) + L-alanine + ATP = L-alanyl-tRNA(Ala) + AMP + diphosphate. Its function is as follows. Catalyzes the attachment of alanine to tRNA(Ala) in a two-step reaction: alanine is first activated by ATP to form Ala-AMP and then transferred to the acceptor end of tRNA(Ala). Also edits incorrectly charged Ser-tRNA(Ala) and Gly-tRNA(Ala) via its editing domain. The chain is Alanine--tRNA ligase from Burkholderia pseudomallei (strain 1106a).